Consider the following 132-residue polypeptide: Transmembrane protein 170B (132 aa).

The Extracellular segment spans residues 1-37 (MRAEGADHSMINLSVQQVLSLWAHGTVLRNLTEMWYW). N12 is a glycosylation site (N-linked (GlcNAc...) asparagine). The helical transmembrane segment at 38–58 (IFLWALFSSLFVHGAAGVLMF) threads the bilayer. Residues 59 to 68 (VMLQRHRQGR) lie on the Cytoplasmic side of the membrane. Residues 69–89 (VLSIIAVSIGFLASVTGAMIT) traverse the membrane as a helical segment. The Extracellular portion of the chain corresponds to 90-104 (SAAVAGIYRVAGKNM). A helical membrane pass occupies residues 105–125 (APLEALVWGVGQTVLTLIISF). Over 126–132 (SRILATL) the chain is Cytoplasmic.

It belongs to the TMEM170 family. In terms of assembly, interacts with CTNNB1.

The protein resides in the cell membrane. The chain is Transmembrane protein 170B (Tmem170b) from Rattus norvegicus (Rat).